Reading from the N-terminus, the 366-residue chain is GTP cyclohydrolase 1 type 2 homolog (366 aa).

5 residues coordinate Zn(2+): H64, H65, D102, H326, and E329.

Belongs to the GTP cyclohydrolase I type 2/NIF3 family. In terms of assembly, toroid-shaped homohexamer that has a central cavity of about 38 Angstroms diameter.

The chain is GTP cyclohydrolase 1 type 2 homolog from Staphylococcus aureus (strain Mu50 / ATCC 700699).